The following is a 91-amino-acid chain: Cytochrome c6 (91 aa).

Residues Cys-17, Cys-20, His-21, and Met-63 each contribute to the heme c site.

This sequence belongs to the cytochrome c family. PetJ subfamily. In terms of assembly, monomer. Post-translationally, binds 1 heme c group covalently per subunit.

The protein resides in the plastid. The protein localises to the chloroplast thylakoid lumen. Functionally, functions as an electron carrier between membrane-bound cytochrome b6-f and photosystem I in oxygenic photosynthesis. This chain is Cytochrome c6 (petJ), found in Cladophora glomerata.